Reading from the N-terminus, the 144-residue chain is Large ribosomal subunit protein uL15 (144 aa).

The segment at 1 to 57 (MFLNTLRPGEGSKHAPKRVGRGIGSGLGKTGGRGHKGLKSRSGGSVKPGFEGGQMPL) is disordered. The span at 21-31 (RGIGSGLGKTG) shows a compositional bias: gly residues.

This sequence belongs to the universal ribosomal protein uL15 family. As to quaternary structure, part of the 50S ribosomal subunit.

Functionally, binds to the 23S rRNA. In Marinomonas sp. (strain MWYL1), this protein is Large ribosomal subunit protein uL15.